The primary structure comprises 468 residues: ATP synthase subunit beta (468 aa).

Gly155–Thr162 contacts ATP.

It belongs to the ATPase alpha/beta chains family. As to quaternary structure, F-type ATPases have 2 components, CF(1) - the catalytic core - and CF(0) - the membrane proton channel. CF(1) has five subunits: alpha(3), beta(3), gamma(1), delta(1), epsilon(1). CF(0) has three main subunits: a(1), b(2) and c(9-12). The alpha and beta chains form an alternating ring which encloses part of the gamma chain. CF(1) is attached to CF(0) by a central stalk formed by the gamma and epsilon chains, while a peripheral stalk is formed by the delta and b chains.

Its subcellular location is the cell inner membrane. It carries out the reaction ATP + H2O + 4 H(+)(in) = ADP + phosphate + 5 H(+)(out). Produces ATP from ADP in the presence of a proton gradient across the membrane. The catalytic sites are hosted primarily by the beta subunits. This chain is ATP synthase subunit beta, found in Bdellovibrio bacteriovorus (strain ATCC 15356 / DSM 50701 / NCIMB 9529 / HD100).